The sequence spans 1231 residues: STE20-like serine/threonine-protein kinase (1231 aa).

S14 carries the post-translational modification Phosphoserine. Positions 34 to 292 (WETIGELGDG…TSQLLQHPFV (259 aa)) constitute a Protein kinase domain. Residues 40–48 (LGDGAFGKV) and K63 each bind ATP. The active-site Proton acceptor is the D155. The residue at position 183 (T183) is a Phosphothreonine. S189 is modified (phosphoserine). The tract at residues 309-351 (AEVTEEVEDGKEEDDDEEIENSLPIPTNKRASSDLSIASSEED) is disordered. The span at 312-328 (TEEVEDGKEEDDDEEIE) shows a compositional bias: acidic residues. 8 positions are modified to phosphoserine: S330, S340, S341, S344, S347, S348, S354, and S372. A compositionally biased stretch (polar residues) spans 337-347 (KRASSDLSIAS). The segment at 405–478 (PDRATELPES…KQPVLENKLV (74 aa)) is disordered. Basic and acidic residues-rich tracts occupy residues 407–428 (RATELPESGREEKRPKLDRLPD) and 446–478 (DHAVTSETNIEHNLKPEKERDQEKQPVLENKLV). S507 is subject to Phosphoserine. Over residues 516-531 (THEKLRKDDTTQKDVI) the composition is skewed to basic and acidic residues. Residues 516 to 757 (THEKLRKDDT…TGSTADNSSI (242 aa)) form a disordered region. Phosphoserine occurs at positions 536 and 554. The segment covering 601-613 (TDQKLVENTHEKQ) has biased composition (basic and acidic residues). The span at 615-624 (PISSETTLDT) shows a compositional bias: polar residues. Residues S641 and S661 each carry the phosphoserine modification. Positions 641 to 660 (STEEVEVEGAVSETDEEDVQ) are enriched in acidic residues. Over residues 683–692 (EAPAQVEVQV) the composition is skewed to low complexity. Pro residues predominate over residues 693 to 706 (PVPPQPSEPPPAPI). The residue at position 775 (S775) is a Phosphoserine. The residue at position 810 (T810) is a Phosphothreonine. S814 carries the phosphoserine modification. Residues 822-1065 (LRRQELRELR…LKNRQTQERA (244 aa)) are a coiled coil. The UVR domain maps to 871 to 906 (DQEIENLEKQQKQTIERLEQEHTNRLRDEAKRIKGE). Phosphothreonine is present on T1093. Positions 1105 to 1179 (SAQEEKRQKN…ELKEWREKLR (75 aa)) form a coiled coil.

It belongs to the protein kinase superfamily. STE Ser/Thr protein kinase family. STE20 subfamily. Proteolytically cleaved by caspase-3. In terms of processing, autophosphorylated. In terms of tissue distribution, ubiquitously expressed.

It localises to the cytoplasm. The enzyme catalyses L-seryl-[protein] + ATP = O-phospho-L-seryl-[protein] + ADP + H(+). The catalysed reaction is L-threonyl-[protein] + ATP = O-phospho-L-threonyl-[protein] + ADP + H(+). Functionally, mediates apoptosis and actin stress fiber dissolution. In Cavia porcellus (Guinea pig), this protein is STE20-like serine/threonine-protein kinase (SLK).